The primary structure comprises 554 residues: Glucose-binding protein GlcS (554 aa).

Topologically, residues 1-17 (MKRKYPYSLAKGLTSTQ) are cytoplasmic. Residues 18-38 (IAVIVAVIVIVIIIGVVAGFV) traverse the membrane as a helical segment. At 39-525 (LTKGPSTTAV…YGLTNNTQKT (487 aa)) the chain is on the extracellular side. Residues 526-546 (SNSVMLFLLPFLALPLAIASI) traverse the membrane as a helical segment. The Cytoplasmic portion of the chain corresponds to 547–554 (DNKYYLLK).

Belongs to the bacterial solute-binding protein 1 family. As to quaternary structure, the complex is composed of two ATP-binding proteins (GlcV), two transmembrane proteins (GlcT and GlcU) and a solute-binding protein (GlcS).

The protein resides in the cell membrane. With respect to regulation, binding of glucose is strongly inhibited by galactose and mannose. Part of the ABC transporter complex GlcSTUV involved in glucose uptake. Binds glucose. Can also bind galactose and mannose. This is Glucose-binding protein GlcS from Saccharolobus solfataricus (strain ATCC 35092 / DSM 1617 / JCM 11322 / P2) (Sulfolobus solfataricus).